Here is a 126-residue protein sequence, read N- to C-terminus: Adenosine 5'-monophosphoramidase HINT1 (126 aa).

A2 is modified (N-acetylalanine). One can recognise an HIT domain in the interval 18-126 (IFGKIIRKEI…GGRQMNWPPG (109 aa)). K21 and K30 each carry N6-acetyllysine. Residue 43–44 (DI) coordinates AMP. S45 and S72 each carry phosphoserine. AMP contacts are provided by residues N99, 105-107 (GQS), and 112-114 (HLH). The Histidine triad motif signature appears at 110 to 114 (HVHLH). Catalysis depends on H112, which acts as the Tele-AMP-histidine intermediate.

It belongs to the HINT family. As to quaternary structure, homodimer. Interacts with CDK7. Interacts with RUVBL1 and RUVBL2 and is associated with the LEF1/TCF1-CTNNB1 complex and with a KAT5 histone acetyltransferase complex. Identified in a complex with MITF and CTNNB1. Interacts with CDC34 and RBX1, and is part of a SCF (SKP2-CUL1-F-box protein) E3 ubiquitin-protein ligase complex. Interacts with SUMO1, SUMO2 and RGS17. Interacts with the Ten-1 ICD form of TENM1. Interacts with CALM1; interaction increases in the presence of calcium ions. As to expression, widely expressed.

The protein resides in the cytoplasm. Its subcellular location is the nucleus. It carries out the reaction adenosine 5'-phosphoramidate + H2O = AMP + NH4(+). Its function is as follows. Exhibits adenosine 5'-monophosphoramidase activity, hydrolyzing purine nucleotide phosphoramidates with a single phosphate group such as adenosine 5'monophosphoramidate (AMP-NH2) to yield AMP and NH2. Hydrolyzes adenosine 5'monophosphomorpholidate (AMP-morpholidate) and guanosine 5'monophosphomorpholidate (GMP-morpholidate). Hydrolyzes lysyl-AMP (AMP-N-epsilon-(N-alpha-acetyl lysine methyl ester)) generated by lysine tRNA ligase. Hydrolyzes Met-AMP, His-AMP, Asp-AMP, lysyl-GMP (GMP-N-epsilon-(N-alpha-acetyl lysine methyl ester)) and AMP-N-alanine methyl ester. Can also convert adenosine 5'-O-phosphorothioate and guanosine 5'-O-phosphorothioate to the corresponding nucleoside 5'-O-phosphates with concomitant release of hydrogen sulfide. In addition, functions as a scaffolding protein that modulates transcriptional activation by the LEF1/TCF1-CTNNB1 complex and by the complex formed with MITF and CTNNB1. Modulates p53/TP53 levels and p53/TP53-mediated apoptosis. Modulates proteasomal degradation of target proteins by the SCF (SKP2-CUL1-F-box protein) E3 ubiquitin-protein ligase complex. Also exhibits SUMO-specific isopeptidase activity, deconjugating SUMO1 from RANGAP1 and RGS17. In Oryctolagus cuniculus (Rabbit), this protein is Adenosine 5'-monophosphoramidase HINT1 (HINT1).